Consider the following 710-residue polypeptide: Probable inactive DNA (cytosine-5)-methyltransferase DRM3 (710 aa).

The tract at residues 1 to 21 is disordered; the sequence is MADMRRRNGSGGSSNHERNEQ. Residues 52-92 form the UBA 1 domain; it reads SGSNVKSLLIEMGFCPTLVQKAIDENGQDDFELLLEILTKS. Residues 167–184 show a composition bias toward acidic residues; it reads ESEDSLDGAEINEEDEDV. A disordered region spans residues 167 to 192; the sequence is ESEDSLDGAEINEEDEDVTPVTARGP. In terms of domain architecture, UBA 2 spans 198-242; the sequence is QLFETMDKTLRLLEMGFSNDEISMAIEKIGTKGQISVLAESIVTG. The segment at 282-360 is disordered; that stretch reads AQKEDGGGGS…MGDSSSFMET (79 aa). Basic and acidic residues predominate over residues 339-350; the sequence is YDDRGKRLRPED. The SAM-dependent MTase DRM-type domain maps to 379 to 710; that stretch reads QPRLSQSLGP…RVTKRVRDMM (332 aa).

It belongs to the class I-like SAM-binding methyltransferase superfamily. DRM-methyltransferase family. Interacts with Pol V.

The protein localises to the nucleus. Functionally, catalytically inactive DNA methyltransferase that acts as regulatory factor for DRM2-mediated DNA methylation. Required for maintenance of non-CpG DNA methylation. Required for normal establishment and maintenance of RNA-directed DNA methylation (RdDM) and accumulation of specific repeat-associated small interfering RNAs (siRNAs). Required for nucleolus organizer region (NOR) nuclear organization during interphase. Acts downstream of the production of siRNAs. May promote RNA polymerase V (Pol V) transcriptional elongation or assist in the stabilization of Pol V transcripts. The protein is Probable inactive DNA (cytosine-5)-methyltransferase DRM3 of Arabidopsis thaliana (Mouse-ear cress).